The primary structure comprises 429 residues: Histidinol dehydrogenase (429 aa).

NAD(+) is bound by residues Tyr130, Gln191, and Asn214. Substrate is bound by residues Ser237, Gln259, and His262. Zn(2+) contacts are provided by Gln259 and His262. Residues Glu327 and His328 each act as proton acceptor in the active site. Residues His328, Asp361, Glu415, and His420 each contribute to the substrate site. Asp361 lines the Zn(2+) pocket. A Zn(2+)-binding site is contributed by His420.

The protein belongs to the histidinol dehydrogenase family. Requires Zn(2+) as cofactor.

The catalysed reaction is L-histidinol + 2 NAD(+) + H2O = L-histidine + 2 NADH + 3 H(+). Its pathway is amino-acid biosynthesis; L-histidine biosynthesis; L-histidine from 5-phospho-alpha-D-ribose 1-diphosphate: step 9/9. In terms of biological role, catalyzes the sequential NAD-dependent oxidations of L-histidinol to L-histidinaldehyde and then to L-histidine. This Geobacter sulfurreducens (strain ATCC 51573 / DSM 12127 / PCA) protein is Histidinol dehydrogenase.